The primary structure comprises 699 residues: Polyribonucleotide nucleotidyltransferase (699 aa).

Mg(2+) contacts are provided by aspartate 485 and aspartate 491. The region spanning 552–611 (PRITTIKINPEKIRDVIGKGGAVIRALTEETGTTIELEDDGTVRIASSNGEATKEAIRRI) is the KH domain. Residues 621–689 (GRIYNGKVIR…RQGRVRLSIK (69 aa)) form the S1 motif domain.

Belongs to the polyribonucleotide nucleotidyltransferase family. Component of the RNA degradosome, which is a multiprotein complex involved in RNA processing and mRNA degradation. Mg(2+) is required as a cofactor.

Its subcellular location is the cytoplasm. It catalyses the reaction RNA(n+1) + phosphate = RNA(n) + a ribonucleoside 5'-diphosphate. Functionally, involved in mRNA degradation. Catalyzes the phosphorolysis of single-stranded polyribonucleotides processively in the 3'- to 5'-direction. The sequence is that of Polyribonucleotide nucleotidyltransferase from Shewanella sp. (strain W3-18-1).